We begin with the raw amino-acid sequence, 204 residues long: ATP phosphoribosyltransferase (204 aa).

It belongs to the ATP phosphoribosyltransferase family. Short subfamily. In terms of assembly, heteromultimer composed of HisG and HisZ subunits.

The protein resides in the cytoplasm. The enzyme catalyses 1-(5-phospho-beta-D-ribosyl)-ATP + diphosphate = 5-phospho-alpha-D-ribose 1-diphosphate + ATP. It participates in amino-acid biosynthesis; L-histidine biosynthesis; L-histidine from 5-phospho-alpha-D-ribose 1-diphosphate: step 1/9. Catalyzes the condensation of ATP and 5-phosphoribose 1-diphosphate to form N'-(5'-phosphoribosyl)-ATP (PR-ATP). Has a crucial role in the pathway because the rate of histidine biosynthesis seems to be controlled primarily by regulation of HisG enzymatic activity. The chain is ATP phosphoribosyltransferase from Staphylococcus epidermidis (strain ATCC 35984 / DSM 28319 / BCRC 17069 / CCUG 31568 / BM 3577 / RP62A).